The chain runs to 103 residues: Large ribosomal subunit protein bL21 (103 aa).

This sequence belongs to the bacterial ribosomal protein bL21 family. As to quaternary structure, part of the 50S ribosomal subunit. Contacts protein L20.

This protein binds to 23S rRNA in the presence of protein L20. The polypeptide is Large ribosomal subunit protein bL21 (Borrelia garinii subsp. bavariensis (strain ATCC BAA-2496 / DSM 23469 / PBi) (Borreliella bavariensis)).